The following is a 538-amino-acid chain: Sensor protein CitS (538 aa).

Over 1-13 the chain is Cytoplasmic; it reads MKRRLFPLTFSAK. The helical transmembrane segment at 14–34 threads the bilayer; sequence MMGFIALLIIAMFVLLGVFLN. Topologically, residues 35–174 are extracellular; sequence EQYARTLEEQ…DIQQVIGERL (140 aa). A helical transmembrane segment spans residues 175 to 195; it reads IAMWQIVVVIMILGLMGTWLV. Residues 196 to 538 lie on the Cytoplasmic side of the membrane; the sequence is ANTVKKATLG…TIPKHEAKEG (343 aa). Positions 216 to 282 constitute a PAS domain; the sequence is QQKEAILQSI…PEVLQVGKGQ (67 aa). Positions 339 to 534 constitute a Histidine kinase domain; it reads AQTHEFSNKL…CFVLTIPKHE (196 aa). The residue at position 342 (histidine 342) is a Phosphohistidine; by autocatalysis.

The protein resides in the cell membrane. It carries out the reaction ATP + protein L-histidine = ADP + protein N-phospho-L-histidine.. Member of the two-component regulatory system CitT/CitS. Functions probably as a membrane-associated protein kinase that phosphorylates CitT in response to environmental citrate or Mg(2+)-citrate complex. The sequence is that of Sensor protein CitS (citS) from Halalkalibacterium halodurans (strain ATCC BAA-125 / DSM 18197 / FERM 7344 / JCM 9153 / C-125) (Bacillus halodurans).